A 1121-amino-acid polypeptide reads, in one-letter code: Potassium channel subfamily U member 1 (1121 aa).

Residues 1–24 (MSQTLLDSLNQKELTETSCTIEIQ) lie on the Extracellular side of the membrane. A helical membrane pass occupies residues 25 to 45 (AAFILSSLATFFGGLIILFLF). At 46–101 (RIALKSSRSWKYVKGPRGLLELFSSRRIEANPLRKLYFHGVFRQRIEMLLSAQTVV) the chain is on the cytoplasmic side. A helical membrane pass occupies residues 102–122 (GQVLVILVFVLSIGSLVIYFI). The Extracellular portion of the chain corresponds to 123–137 (NSMDPVRRCSSYEDK). The helical transmembrane segment at 138–158 (IVHVDLSFNAFFSFYFGLRFW) threads the bilayer. Residues 159–165 (AAEDKIK) are Cytoplasmic-facing. The chain crosses the membrane as a helical span at residues 166–186 (FWLEMNSIVDIFTIPPTFISY). The Extracellular segment spans residues 187–188 (YL). A helical; Voltage-sensor transmembrane segment spans residues 189–209 (KSNWLGLRFLRALRLLELPKI). Residues 210–226 (LQILQVIKTSNSVKLSK) are Cytoplasmic-facing. The chain crosses the membrane as a helical span at residues 227–247 (LLSIVISTWFTAAGFLHLVEN). Over 248–259 (SGDPWLNGRNSQ) the chain is Extracellular. The pore-forming intramembrane region spans 260–282 (TMSYFESIYLVTATMSTVGFGDV). A Selectivity for potassium motif is present at residues 276 to 279 (TVGF). The Extracellular portion of the chain corresponds to 283-290 (VAKTSLGR). Residues 291–311 (IFIVFFTLGSLILFANYIPEM) form a helical membrane-spanning segment. The Cytoplasmic portion of the chain corresponds to 312–1121 (VELFSTRKKY…LDASDIVQEK (810 aa)). RCK N-terminal domains are found at residues 331–473 (KKFI…DNIL) and 718–889 (QNHI…DGML). Disordered stretches follow at residues 836 to 858 (SPTPGSSKSEVKPSSAFDSKERK) and 1052 to 1076 (DSSPSIQAQNNSTNATTPLAQGSNF).

It belongs to the potassium channel family. Calcium-activated (TC 1.A.1.3) subfamily. KCa5.1/KCNU1 sub-subfamily. In terms of assembly, homotetramer; which constitutes the calcium-activated potassium channel. Interact with LRRC52; this interaction changes some channel gating properties, such as shifting gating to more negative potentials at a given pH. Testis-specific. Mainly expressed in spermatocytes. In terms of tissue distribution, expressed in testis, brain, eye and kidney.

Its subcellular location is the cell membrane. The protein resides in the cytoplasm. The enzyme catalyses K(+)(in) = K(+)(out). Its activity is regulated as follows. Regulated by changes in cytosolic pH; activated by alkalization. In contrast to human KCNU1 is not activated by Ca(2+) or Mg(2+). The auxiliary subunit LRRC52 shifts the activation of KCNU1 to more negative potentials at a given pH. Functionally, testis-specific potassium channel activated by both intracellular pH and membrane voltage that mediates export of K(+). Represents the primary spermatozoan K(+) current. The channel underlies a pH-triggered membrane hyperpolarization during the process of sperm capacitation, as sperm encounter the alkaline environment near the ovum in the female reproductive tract, thereby playing an essential for male fertility. In Mus musculus (Mouse), this protein is Potassium channel subfamily U member 1 (Kcnu1).